We begin with the raw amino-acid sequence, 255 residues long: uncharacterized protein (255 aa).

The Microbody targeting signal signature appears at 253–255 (SKI).

Belongs to the enoyl-CoA hydratase/isomerase family.

It is found in the peroxisome. This is an uncharacterized protein from Caenorhabditis elegans.